The chain runs to 240 residues: Endonuclease NucS 1 (240 aa).

This sequence belongs to the NucS endonuclease family.

Its subcellular location is the cytoplasm. Cleaves both 3' and 5' ssDNA extremities of branched DNA structures. The protein is Endonuclease NucS 1 of Halobacterium salinarum (strain ATCC 700922 / JCM 11081 / NRC-1) (Halobacterium halobium).